The following is a 62-amino-acid chain: Translational regulator CsrA 3 (62 aa).

This sequence belongs to the CsrA/RsmA family. In terms of assembly, homodimer; the beta-strands of each monomer intercalate to form a hydrophobic core, while the alpha-helices form wings that extend away from the core.

The protein localises to the cytoplasm. A key translational regulator that binds mRNA to regulate translation initiation and/or mRNA stability. Mediates global changes in gene expression, shifting from rapid growth to stress survival by linking envelope stress, the stringent response and the catabolite repression systems. Usually binds in the 5'-UTR; binding at or near the Shine-Dalgarno sequence prevents ribosome-binding, repressing translation, binding elsewhere in the 5'-UTR can activate translation and/or stabilize the mRNA. Its function is antagonized by small RNA(s). This chain is Translational regulator CsrA 3, found in Pseudomonas syringae pv. tomato (strain ATCC BAA-871 / DC3000).